We begin with the raw amino-acid sequence, 413 residues long: Multifunctional CCA protein (413 aa).

Residues glycine 8 and arginine 11 each coordinate ATP. CTP is bound by residues glycine 8 and arginine 11. Positions 21 and 23 each coordinate Mg(2+). ATP is bound by residues arginine 91, arginine 137, and arginine 140. Residues arginine 91, arginine 137, and arginine 140 each coordinate CTP. Positions 228–329 (TGIHTLMVLA…LKVFDKADAW (102 aa)) constitute an HD domain.

It belongs to the tRNA nucleotidyltransferase/poly(A) polymerase family. Bacterial CCA-adding enzyme type 1 subfamily. In terms of assembly, monomer. Can also form homodimers and oligomers. Mg(2+) is required as a cofactor. Requires Ni(2+) as cofactor.

The catalysed reaction is a tRNA precursor + 2 CTP + ATP = a tRNA with a 3' CCA end + 3 diphosphate. It carries out the reaction a tRNA with a 3' CCA end + 2 CTP + ATP = a tRNA with a 3' CCACCA end + 3 diphosphate. In terms of biological role, catalyzes the addition and repair of the essential 3'-terminal CCA sequence in tRNAs without using a nucleic acid template. Adds these three nucleotides in the order of C, C, and A to the tRNA nucleotide-73, using CTP and ATP as substrates and producing inorganic pyrophosphate. tRNA 3'-terminal CCA addition is required both for tRNA processing and repair. Also involved in tRNA surveillance by mediating tandem CCA addition to generate a CCACCA at the 3' terminus of unstable tRNAs. While stable tRNAs receive only 3'-terminal CCA, unstable tRNAs are marked with CCACCA and rapidly degraded. This is Multifunctional CCA protein from Aeromonas salmonicida (strain A449).